A 99-amino-acid polypeptide reads, in one-letter code: NADH-quinone oxidoreductase subunit K (99 aa).

The next 3 membrane-spanning stretches (helical) occupy residues 3–23, 28–48, and 59–79; these read PINY…GVLL, IVMF…FVTF, and MIAF…LAII.

This sequence belongs to the complex I subunit 4L family. As to quaternary structure, NDH-1 is composed of 14 different subunits. Subunits NuoA, H, J, K, L, M, N constitute the membrane sector of the complex.

It is found in the cell membrane. It catalyses the reaction a quinone + NADH + 5 H(+)(in) = a quinol + NAD(+) + 4 H(+)(out). NDH-1 shuttles electrons from NADH, via FMN and iron-sulfur (Fe-S) centers, to quinones in the respiratory chain. The immediate electron acceptor for the enzyme in this species is believed to be a menaquinone. Couples the redox reaction to proton translocation (for every two electrons transferred, four hydrogen ions are translocated across the cytoplasmic membrane), and thus conserves the redox energy in a proton gradient. This is NADH-quinone oxidoreductase subunit K from Mycobacterium avium (strain 104).